Reading from the N-terminus, the 453-residue chain is Adenylyltransferase and sulfurtransferase MOCS3 (453 aa).

Threonine 62 bears the Phosphothreonine mark. ATP-binding positions include glycine 101, aspartate 122, serine 129–arginine 133, lysine 146, and aspartate 190–asparagine 191. 2 residues coordinate Zn(2+): cysteine 231 and cysteine 234. Cysteine 248 (glycyl thioester intermediate; for adenylyltransferase activity) is an active-site residue. Residues cysteine 306 and cysteine 309 each coordinate Zn(2+). The Rhodanese domain maps to glutamine 355–proline 451. Cysteine 410 (cysteine persulfide intermediate; for sulfurtransferase activity) is an active-site residue.

The protein in the N-terminal section; belongs to the HesA/MoeB/ThiF family. UBA4 subfamily. Zn(2+) serves as cofactor.

Its subcellular location is the cytoplasm. It localises to the cytosol. The enzyme catalyses [molybdopterin-synthase sulfur-carrier protein]-C-terminal Gly-Gly + ATP + H(+) = [molybdopterin-synthase sulfur-carrier protein]-C-terminal Gly-Gly-AMP + diphosphate. The catalysed reaction is [molybdopterin-synthase sulfur-carrier protein]-C-terminal Gly-Gly-AMP + S-sulfanyl-L-cysteinyl-[cysteine desulfurase] + AH2 = [molybdopterin-synthase sulfur-carrier protein]-C-terminal-Gly-aminoethanethioate + L-cysteinyl-[cysteine desulfurase] + A + AMP + 2 H(+). Its pathway is tRNA modification; 5-methoxycarbonylmethyl-2-thiouridine-tRNA biosynthesis. The protein operates within cofactor biosynthesis; molybdopterin biosynthesis. Its function is as follows. Plays a central role in 2-thiolation of mcm(5)S(2)U at tRNA wobble positions of cytosolic tRNA(Lys), tRNA(Glu) and tRNA(Gln). Also essential during biosynthesis of the molybdenum cofactor. Acts by mediating the C-terminal thiocarboxylation of sulfur carriers URM1 and MOCS2A. Its N-terminus first activates URM1 and MOCS2A as acyl-adenylates (-COAMP), then the persulfide sulfur on the catalytic cysteine is transferred to URM1 and MOCS2A to form thiocarboxylation (-COSH) of their C-terminus. The reaction probably involves hydrogen sulfide that is generated from the persulfide intermediate and that acts as a nucleophile towards URM1 and MOCS2A. Subsequently, a transient disulfide bond is formed. Does not use thiosulfate as sulfur donor; NFS1 probably acting as a sulfur donor for thiocarboxylation reactions. This chain is Adenylyltransferase and sulfurtransferase MOCS3, found in Drosophila yakuba (Fruit fly).